Here is a 124-residue protein sequence, read N- to C-terminus: Small ribosomal subunit protein uS12 (124 aa).

The segment at 1-32 is disordered; the sequence is MPTIQQLVRKGRKDKATKTKTPALKGSPQRRG. D89 bears the 3-methylthioaspartic acid mark. Residues 105–124 form a disordered region; it reads QGVRGRQQARSRYGAKKEKK. The segment covering 111-124 has biased composition (basic residues); it reads QQARSRYGAKKEKK.

The protein belongs to the universal ribosomal protein uS12 family. Part of the 30S ribosomal subunit. Contacts proteins S8 and S17. May interact with IF1 in the 30S initiation complex.

In terms of biological role, with S4 and S5 plays an important role in translational accuracy. Functionally, interacts with and stabilizes bases of the 16S rRNA that are involved in tRNA selection in the A site and with the mRNA backbone. Located at the interface of the 30S and 50S subunits, it traverses the body of the 30S subunit contacting proteins on the other side and probably holding the rRNA structure together. The combined cluster of proteins S8, S12 and S17 appears to hold together the shoulder and platform of the 30S subunit. The chain is Small ribosomal subunit protein uS12 from Beutenbergia cavernae (strain ATCC BAA-8 / DSM 12333 / CCUG 43141 / JCM 11478 / NBRC 16432 / NCIMB 13614 / HKI 0122).